The sequence spans 275 residues: Octanoyl-[GcvH]:protein N-octanoyltransferase (275 aa).

Residues 42 to 246 (GQSQPVVRLW…ALQAFGSRLE (205 aa)) form the BPL/LPL catalytic domain. Cys-145 (acyl-thioester intermediate) is an active-site residue.

Belongs to the octanoyltransferase LipL family.

It carries out the reaction N(6)-octanoyl-L-lysyl-[glycine-cleavage complex H protein] + L-lysyl-[lipoyl-carrier protein] = N(6)-octanoyl-L-lysyl-[lipoyl-carrier protein] + L-lysyl-[glycine-cleavage complex H protein]. It participates in protein modification; protein lipoylation via endogenous pathway; protein N(6)-(lipoyl)lysine from octanoyl-[acyl-carrier-protein]. Functionally, catalyzes the amidotransfer (transamidation) of the octanoyl moiety from octanoyl-GcvH to the lipoyl domain of the E2 subunit of lipoate-dependent enzymes. This is Octanoyl-[GcvH]:protein N-octanoyltransferase from Anoxybacillus flavithermus (strain DSM 21510 / WK1).